Consider the following 326-residue polypeptide: Phospho-N-acetylmuramoyl-pentapeptide-transferase (326 aa).

Transmembrane regions (helical) follow at residues 5–25 (GLLITIVVAFLITVLLSPIFI), 51–71 (TPTMGGLMIIFSIIITSLIMA), 82–102 (VWLLIFVLFGYGLLGFLDDFI), 122–142 (IIIALVFYFILRNQGFSTVIY), 148–168 (LQFDIGWFYAVLVIFMMVGAS), 180–200 (LLAGTAAIAFGAFAIIAWYGI), 204–224 (VVAVFSLAVVGALLGFLVFNA), 229–249 (VFMGDTGSLALGGAIAAISIL), 252–272 (LEILLIIIGGVFVIETLSVII), and 304–324 (VVTTFWLVGLLFAMLGVYIEV).

This sequence belongs to the glycosyltransferase 4 family. MraY subfamily. It depends on Mg(2+) as a cofactor.

It localises to the cell membrane. The catalysed reaction is UDP-N-acetyl-alpha-D-muramoyl-L-alanyl-gamma-D-glutamyl-meso-2,6-diaminopimeloyl-D-alanyl-D-alanine + di-trans,octa-cis-undecaprenyl phosphate = di-trans,octa-cis-undecaprenyl diphospho-N-acetyl-alpha-D-muramoyl-L-alanyl-D-glutamyl-meso-2,6-diaminopimeloyl-D-alanyl-D-alanine + UMP. It functions in the pathway cell wall biogenesis; peptidoglycan biosynthesis. Its function is as follows. Catalyzes the initial step of the lipid cycle reactions in the biosynthesis of the cell wall peptidoglycan: transfers peptidoglycan precursor phospho-MurNAc-pentapeptide from UDP-MurNAc-pentapeptide onto the lipid carrier undecaprenyl phosphate, yielding undecaprenyl-pyrophosphoryl-MurNAc-pentapeptide, known as lipid I. The protein is Phospho-N-acetylmuramoyl-pentapeptide-transferase of Oceanobacillus iheyensis (strain DSM 14371 / CIP 107618 / JCM 11309 / KCTC 3954 / HTE831).